Here is a 149-residue protein sequence, read N- to C-terminus: GATA transcription factor 15 (149 aa).

Residues 1–10 are compositionally biased toward basic and acidic residues; it reads MLDPTEKVID. Disordered stretches follow at residues 1–41 and 76–102; these read MLDP…NEKK and RRTLISNRSEDKKKKSHNRNPKFGDSL. The segment at 37-91 adopts a GATA-type zinc-finger fold; the sequence is SNEKKSCAICGTSKTPLWRGGPAGPKSLCNACGIRNRKKRRTLISNRSEDKKKKS.

It belongs to the type IV zinc-finger family. Class B subfamily.

The protein resides in the nucleus. Its function is as follows. Transcriptional regulator that specifically binds 5'-GATA-3' or 5'-GAT-3' motifs within gene promoters. This chain is GATA transcription factor 15 (GATA15), found in Arabidopsis thaliana (Mouse-ear cress).